A 465-amino-acid chain; its full sequence is Protein dml1 (465 aa).

Serine 446 carries the phosphoserine modification.

Belongs to the misato family.

The protein resides in the mitochondrion. Involved in the partitioning of the mitochondrial organelle and mitochondrial DNA (mtDNA) inheritance. The polypeptide is Protein dml1 (dml1) (Schizosaccharomyces pombe (strain 972 / ATCC 24843) (Fission yeast)).